We begin with the raw amino-acid sequence, 812 residues long: Probable inorganic carbon transporter subunit DabA (812 aa).

Zn(2+) is bound by residues Cys-337, Asp-339, His-499, and Cys-514.

This sequence belongs to the inorganic carbon transporter (TC 9.A.2) DabA family. As to quaternary structure, forms a complex with DabB. Zn(2+) serves as cofactor.

It is found in the cell inner membrane. In terms of biological role, part of an energy-coupled inorganic carbon pump. This is Probable inorganic carbon transporter subunit DabA from Xanthomonas oryzae pv. oryzae (strain MAFF 311018).